Here is a 456-residue protein sequence, read N- to C-terminus: Argininosuccinate lyase (456 aa).

Belongs to the lyase 1 family. Argininosuccinate lyase subfamily.

It localises to the cytoplasm. The catalysed reaction is 2-(N(omega)-L-arginino)succinate = fumarate + L-arginine. It functions in the pathway amino-acid biosynthesis; L-arginine biosynthesis; L-arginine from L-ornithine and carbamoyl phosphate: step 3/3. The chain is Argininosuccinate lyase from Listeria monocytogenes serotype 4a (strain HCC23).